A 238-amino-acid polypeptide reads, in one-letter code: Pre-protein VI (238 aa).

Residues 1 to 33 constitute a propeptide that is removed on maturation; that stretch reads MDAVNFSILAPRYGSHPMMSAWSGIGTSDMNGG. The amphipathic alpha-helix essential for membrane lytic activity stretch occupies residues 34 to 54; the sequence is AFNWGGIWSGIKNFGSNVKNW. The segment at 36-53 is involved in endosomal membrane lysis; sequence NWGGIWSGIKNFGSNVKN. The segment at 48-74 is interaction with hexon protein; the sequence is GSNVKNWGSRAWNSQTGKLLRQKLNDT. A Nuclear export signal motif is present at residues 67–76; the sequence is LRQKLNDTKV. Residues 153–156 carry the PPXY motif motif; that stretch reads PPSY. The tract at residues 187–212 is disordered; that stretch reads TLELKPSDQPPPYSPQSSNMPVTAPV. A Nuclear export signal motif is present at residues 219 to 230; the sequence is GTLANIVGVGLS. The segment at 221–227 is interaction with hexon protein; it reads LANIVGV. The segment at 228–238 is binds to importin alpha/beta, involved in hexon nuclear import; sequence GLSNVKRRRCF. Residues 233–236 carry the Nuclear localization signal motif; sequence KRRR.

Belongs to the adenoviridae protein VI family. Interacts with hexon protein; this interaction allows nuclear import of hexon trimers and possibly pre-capsid assembly. Interacts (via C-terminal NLS) with importin alpha/beta. As to quaternary structure, interacts (via PPxY motif) with host NEDD4 ubiquitine ligase; this interaction might play a role in virus intracellular transport during entry. Part of a complex composed of the core-capsid bridging protein, the endosome lysis protein VI and the hexon-linking protein VIII; these interactions bridge the virus core to the capsid. Interacts with peripentonal hexons; this interaction stabilizes the capsid by gluing two peripentonal hexons together and joining them with an adjacent group-of-nine hexon. In terms of assembly, heterodimer with the viral protease; disulfide-linked. Interacts with the viral protease. Ubiquitinated by Nedd4 following partial capsid disassembly; which might play a role in intracellular virus movement during entry. Post-translationally, contains the major nuclear import and export signals. Proteolytically removed during virion maturation. The processing of the C-terminus turns the precursor into a mature viral structural protein and abrogates its ability to promote hexon import and act as a potential chaperone protein.

It is found in the host nucleus. Its subcellular location is the host cytoplasm. The protein localises to the virion. Its function is as follows. During virus assembly, promotes hexon trimers nuclear import through nuclear pore complexes via an importin alpha/beta-dependent mechanism. By analogy to herpesviruses capsid assembly, might act as a chaperone to promote the formation of the icosahedral capsid. Functionally, structural component of the virion that provides increased stability to the particle shell through its interaction with the core-capsid bridging protein and the hexon-linking protein VIII. Fibers shedding during virus entry into host cell allows the endosome lysis protein to be exposed as a membrane-lytic peptide. Exhibits pH-independent membrane fragmentation activity and probably mediates viral rapid escape from host endosome via organellar membrane lysis. It is not clear if it then remains partially associated with the capsid and involved in the intracellular microtubule-dependent transport of capsid to the nucleus, or if it is lost during endosomal penetration. In terms of biological role, cofactor that activates the viral protease. Binds to viral protease in a 1:1 ratio. The protein is Pre-protein VI of Canine adenovirus serotype 1 (strain CLL) (CAdV-1).